Reading from the N-terminus, the 1926-residue chain is Myosin-15 (1926 aa).

Residues 29-79 (DGKKKCWIPDGENAYIEAEVKGSEDDGTVIVETADGESLSIKEDKIQQMNP) form the Myosin N-terminal SH3-like domain. Residues 83–770 (EMIEDMAMLT…FLGQLEAIRD (688 aa)) enclose the Myosin motor domain. Lys-127 is modified (N6,N6,N6-trimethyllysine). 176–183 (GESGAGKT) is an ATP binding site. Actin-binding stretches follow at residues 647–669 (LNKL…NPNV) and 749–763 (RFGI…GFLG). In terms of domain architecture, IQ spans 773–802 (LSKVFTLFQARAQGKLMRIKFQKILEERDA). Positions 833–1926 (KSSEVGEEVA…REFGKKVQEE (1094 aa)) form a coiled coil.

This sequence belongs to the TRAFAC class myosin-kinesin ATPase superfamily. Myosin family. In terms of assembly, muscle myosin is a hexameric protein that consists of 2 heavy chain subunits (MHC), 2 alkali light chain subunits (MLC) and 2 regulatory light chain subunits (MLC-2).

The protein localises to the cytoplasm. It is found in the myofibril. Muscle contraction. In Homo sapiens (Human), this protein is Myosin-15 (MYH15).